Consider the following 371-residue polypeptide: Alanine dehydrogenase (371 aa).

Residues R15 and K74 each contribute to the substrate site. The active-site Proton donor/acceptor is the H95. NAD(+) contacts are provided by residues S133, Q177–A178, D197, S219, V238–L239, I266–D269, and V298–M301. D269 acts as the Proton donor/acceptor in catalysis.

The protein belongs to the AlaDH/PNT family. In terms of assembly, homohexamer. Trimer of dimer.

It carries out the reaction L-alanine + NAD(+) + H2O = pyruvate + NH4(+) + NADH + H(+). It participates in amino-acid degradation; L-alanine degradation via dehydrogenase pathway; NH(3) and pyruvate from L-alanine: step 1/1. In terms of biological role, catalyzes the reversible reductive amination of pyruvate to L-alanine. May play a role in cell wall synthesis as L-alanine is an important constituent of the peptidoglycan layer. The sequence is that of Alanine dehydrogenase (ald) from Staphylococcus epidermidis (strain ATCC 35984 / DSM 28319 / BCRC 17069 / CCUG 31568 / BM 3577 / RP62A).